Consider the following 818-residue polypeptide: Myosin-A (818 aa).

Residue serine 19 is modified to Phosphoserine; by PKG. The Myosin motor domain maps to 97-771; it reads MSFGDIGLLN…GAKILTKIQR (675 aa). Position 191 to 198 (191 to 198) interacts with ATP; it reads GESGAGKT. The tract at residues 661–671 is actin-binding; sequence PHFIRCIKPNE. Positions 773 to 818 are tail; that stretch reads KLVEWENCVSVIEAAILKHKYKQKVNKNIPSLLRVQAHIRKKMVAQ.

The protein belongs to the TRAFAC class myosin-kinesin ATPase superfamily. Myosin family. In terms of assembly, component of the glideosome complex composed of GAP50, GAP45, MTIP and MyoA; the complex is formed during the late schizont stage and in merozoites. MyoA, MTIP and GAP45 probably form an initial complex in the cytoplasm which is then recruited to the outer face of the inner membrane complex via the interaction with GAP50. Interacts with ACT1.

The protein localises to the cell membrane. Functionally, myosins are actin-based motor molecules with ATPase activity. Unconventional myosins serve in intracellular movements. Their highly divergent tails are presumed to bind to membranous compartments, which would be moved relative to actin filaments. The polypeptide is Myosin-A (Plasmodium falciparum (isolate 3D7)).